A 475-amino-acid polypeptide reads, in one-letter code: Sulfate adenylyltransferase subunit 1 (475 aa).

Residues 25–239 (KSLLRFLTCG…EVLETVEIQR (215 aa)) form the tr-type G domain. Residues 34 to 41 (GSVDDGKS) form a G1 region. 34 to 41 (GSVDDGKS) is a GTP binding site. Positions 92 to 96 (GITID) are G2. The tract at residues 113–116 (DTPG) is G3. Residues 113 to 117 (DTPGH) and 168 to 171 (NKMD) contribute to the GTP site. Residues 168-171 (NKMD) form a G4 region. The interval 206 to 208 (SAL) is G5.

Belongs to the TRAFAC class translation factor GTPase superfamily. Classic translation factor GTPase family. CysN/NodQ subfamily. In terms of assembly, heterodimer composed of CysD, the smaller subunit, and CysN.

It carries out the reaction sulfate + ATP + H(+) = adenosine 5'-phosphosulfate + diphosphate. Its pathway is sulfur metabolism; hydrogen sulfide biosynthesis; sulfite from sulfate: step 1/3. Functionally, with CysD forms the ATP sulfurylase (ATPS) that catalyzes the adenylation of sulfate producing adenosine 5'-phosphosulfate (APS) and diphosphate, the first enzymatic step in sulfur assimilation pathway. APS synthesis involves the formation of a high-energy phosphoric-sulfuric acid anhydride bond driven by GTP hydrolysis by CysN coupled to ATP hydrolysis by CysD. In Shigella sonnei (strain Ss046), this protein is Sulfate adenylyltransferase subunit 1.